The following is a 331-amino-acid chain: Cathepsin 7 (331 aa).

Residues 1–17 form the signal peptide; the sequence is MTVAVFLAILCLRAALA. Positions 18-111 are cleaved as a propeptide — activation peptide; sequence APRPDYSLDA…GKHIQKRNVK (94 aa). Residues 33-50 carry the Nuclear localization signal motif; it reads KRNNAKTYSPEEEKQRRA. An N-linked (GlcNAc...) asparagine glycan is attached at Asn72. 3 disulfides stabilise this stretch: Cys133-Cys176, Cys167-Cys209, and Cys267-Cys320. The active site involves Cys136. Active-site residues include His274 and Asn298.

It belongs to the peptidase C1 family.

It is found in the endosome. It localises to the lysosome. The protein resides in the cytoplasm. Its subcellular location is the perinuclear region. The protein localises to the golgi apparatus. It is found in the nucleus. It localises to the secreted. The protein resides in the extracellular space. In terms of biological role, involved in trophoblast cell proliferation and differentiation probably by affecting mitotic cell cycle progression. Proteolytic activity and nuclear localization are essential for its role in cell cycle progression. The polypeptide is Cathepsin 7 (Cts7) (Rattus norvegicus (Rat)).